Consider the following 405-residue polypeptide: Arginine deiminase (405 aa).

The active-site Amidino-cysteine intermediate is Cys-395.

Belongs to the arginine deiminase family.

It is found in the cytoplasm. The enzyme catalyses L-arginine + H2O = L-citrulline + NH4(+). Its pathway is amino-acid degradation; L-arginine degradation via ADI pathway; carbamoyl phosphate from L-arginine: step 1/2. The chain is Arginine deiminase from Rhodococcus erythropolis (strain PR4 / NBRC 100887).